Here is an 86-residue protein sequence, read N- to C-terminus: RNA-binding protein Hfq (86 aa).

The Sm domain occupies 9 to 68 (DPYLNTLRKEKVPVSIYLVNGIKLQGSIESFDQFVVLLKNTVSQMVYKHAISTVVPARPV). A disordered region spans residues 66–86 (RPVRLPSPTDSEHGDSEPGNA). Positions 75–86 (DSEHGDSEPGNA) are enriched in basic and acidic residues.

This sequence belongs to the Hfq family. Homohexamer.

Functionally, RNA chaperone that binds small regulatory RNA (sRNAs) and mRNAs to facilitate mRNA translational regulation in response to envelope stress, environmental stress and changes in metabolite concentrations. Also binds with high specificity to tRNAs. The polypeptide is RNA-binding protein Hfq (Pseudomonas putida (strain ATCC 700007 / DSM 6899 / JCM 31910 / BCRC 17059 / LMG 24140 / F1)).